Here is a 789-residue protein sequence, read N- to C-terminus: Alpha-glucosidase 2 (789 aa).

Disordered regions lie at residues 1–24 (MTGL…PRVI) and 512–531 (ELNP…ASHP). The active-site Proton donor is the Asp523. The Proton acceptor role is filled by Glu756.

The protein belongs to the glycosyl hydrolase 63 family.

It functions in the pathway glycan metabolism; N-glycan degradation. In Arabidopsis thaliana (Mouse-ear cress), this protein is Alpha-glucosidase 2 (GCS2).